Consider the following 254-residue polypeptide: Acetylglutamate kinase (254 aa).

Substrate-binding positions include 40 to 41, Arg-62, and Asn-158; that span reads GG.

This sequence belongs to the acetylglutamate kinase family. ArgB subfamily.

It localises to the cytoplasm. The catalysed reaction is N-acetyl-L-glutamate + ATP = N-acetyl-L-glutamyl 5-phosphate + ADP. The protein operates within amino-acid biosynthesis; L-arginine biosynthesis; N(2)-acetyl-L-ornithine from L-glutamate: step 2/4. Functionally, catalyzes the ATP-dependent phosphorylation of N-acetyl-L-glutamate. In Chloroflexus aggregans (strain MD-66 / DSM 9485), this protein is Acetylglutamate kinase.